We begin with the raw amino-acid sequence, 516 residues long: Squalene epoxidase 4 (516 aa).

Transmembrane regions (helical) follow at residues 2 to 22 (TYAWLWTLLAFVLTWMVFHLI) and 43 to 63 (ATDVIIVGAGVAGASLAYALA). FAD contacts are provided by residues 53–54 (VA), 73–74 (ER), Arg81, Arg153, Val169, Asp335, and Met348. A helical transmembrane segment spans residues 435–455 (ILGGMNPHPLTLVLHLVAITL).

Belongs to the squalene monooxygenase family. Requires FAD as cofactor. Expressed mainly in seedlings and inflorescences.

It is found in the membrane. It carries out the reaction squalene + reduced [NADPH--hemoprotein reductase] + O2 = (S)-2,3-epoxysqualene + oxidized [NADPH--hemoprotein reductase] + H2O + H(+). It functions in the pathway terpene metabolism; lanosterol biosynthesis; lanosterol from farnesyl diphosphate: step 2/3. Catalyzes the stereospecific oxidation of squalene to (S)-2,3-epoxysqualene, and is considered to be a rate-limiting enzyme in steroid biosynthesis. The polypeptide is Squalene epoxidase 4 (SQE4) (Arabidopsis thaliana (Mouse-ear cress)).